The sequence spans 511 residues: ADP,ATP carrier protein 4 (511 aa).

A run of 12 helical transmembrane segments spans residues 34 to 54 (VSKF…QNLI), 70 to 90 (IISF…TAIY), 102 to 122 (IFYL…YVIF), 157 to 177 (FSLF…LLFW), 192 to 212 (FYPL…QFLE), 231 to 251 (FHTL…IIAI), 296 to 316 (LIAT…GPWK), 330 to 350 (AAFI…FVVL), 361 to 381 (FTAA…FFAV), 390 to 410 (LIIA…IGAI), 453 to 473 (LGKS…PSAS), and 476 to 496 (SIST…LWAT).

Belongs to the ADP/ATP translocase tlc family.

It localises to the cell membrane. In terms of biological role, provides the rickettsial cell with host ATP in exchange for rickettsial ADP. This is an obligate exchange system. This energy acquiring activity is an important component of rickettsial parasitism. The polypeptide is ADP,ATP carrier protein 4 (tlcD) (Rickettsia conorii (strain ATCC VR-613 / Malish 7)).